The primary structure comprises 159 residues: Cyclic pyranopterin monophosphate synthase (159 aa).

Residues 75 to 77 (LCH) and 113 to 114 (ME) each bind substrate. Asp128 is a catalytic residue.

The protein belongs to the MoaC family. As to quaternary structure, homohexamer; trimer of dimers.

It catalyses the reaction (8S)-3',8-cyclo-7,8-dihydroguanosine 5'-triphosphate = cyclic pyranopterin phosphate + diphosphate. The protein operates within cofactor biosynthesis; molybdopterin biosynthesis. Catalyzes the conversion of (8S)-3',8-cyclo-7,8-dihydroguanosine 5'-triphosphate to cyclic pyranopterin monophosphate (cPMP). The protein is Cyclic pyranopterin monophosphate synthase of Cupriavidus necator (strain ATCC 17699 / DSM 428 / KCTC 22496 / NCIMB 10442 / H16 / Stanier 337) (Ralstonia eutropha).